The sequence spans 578 residues: Polymerase acidic protein (578 aa).

In terms of assembly, the RNA polymerase is composed of three subunits: PB1, PB2 and PA. Post-translationally, phosphorylated on serines and threonines by host kinases.

Functionally, implicated in endonuclease cleavage of capped RNA primers. Displays an elongation factor activity in viral RNA synthesis. Dispensable for viral transcription, but not replication. This Infectious salmon anemia virus (isolate Atlantic salmon/Norway/810/9/99) (ISAV) protein is Polymerase acidic protein.